A 124-amino-acid chain; its full sequence is Fluoride-specific ion channel FluC (124 aa).

4 consecutive transmembrane segments (helical) span residues 3-23 (IIAIAVGAAIGANLRYSLSIW), 34-54 (YGTLIVNVIGSFAIGFVLVLA), 66-86 (LLIVTGLLGGFTTFSSLSFET), and 100-120 (LYVLSSFGLGIAGVFLGAGVA). Positions 74 and 77 each coordinate Na(+).

It belongs to the fluoride channel Fluc/FEX (TC 1.A.43) family.

It is found in the cell membrane. It carries out the reaction fluoride(in) = fluoride(out). Na(+) is not transported, but it plays an essential structural role and its presence is essential for fluoride channel function. Its function is as follows. Fluoride-specific ion channel. Important for reducing fluoride concentration in the cell, thus reducing its toxicity. The polypeptide is Fluoride-specific ion channel FluC (Roseiflexus sp. (strain RS-1)).